We begin with the raw amino-acid sequence, 567 residues long: Alpha-glucosidase (567 aa).

Residues 1–17 form the signal peptide; that stretch reads MKAVIVFCLMALSIVDA. Residues Asn-88 and Asn-123 are each glycosylated (N-linked (GlcNAc...) asparagine). Asp-223 functions as the Nucleophile in the catalytic mechanism. An N-linked (GlcNAc...) asparagine glycan is attached at Asn-247. The active-site Proton donor is the Glu-286. N-linked (GlcNAc...) asparagine glycans are attached at residues Asn-290, Asn-313, Asn-319, Asn-499, and Asn-507.

Monomer. In terms of tissue distribution, expressed specifically in the hypopharyngeal glands of worker bees. Also found in the brain of worker bees (at protein level).

The enzyme catalyses Hydrolysis of terminal, non-reducing (1-&gt;4)-linked alpha-D-glucose residues with release of alpha-D-glucose.. Its function is as follows. Converts sucrose in nectar to glucose and fructose. This is Alpha-glucosidase from Apis mellifera (Honeybee).